Reading from the N-terminus, the 660-residue chain is Interferon-induced GTP-binding protein Mx1 (660 aa).

The residue at position 1 (M1) is an N-acetylmethionine. The segment covering 1–10 (MVHSEAKMTR) has biased composition (basic and acidic residues). A disordered region spans residues 1–29 (MVHSEAKMTRPDSASASKQQLLNGNADIQ). A compositionally biased stretch (polar residues) spans 12–29 (DSASASKQQLLNGNADIQ). Residues 67-340 (DLALPAIAVI…LITHISKSLP (274 aa)) enclose the Dynamin-type G domain. The segment at 77-84 (GDQSSGKS) is G1 motif. 77 to 84 (GDQSSGKS) is a GTP binding site. The segment at 102-104 (VTR) is G2 motif. The G3 motif stretch occupies residues 178-181 (DLPG). GTP is bound by residues 178-182 (DLPGI) and 247-250 (TKPD). Residues 247 to 250 (TKPD) are G4 motif. A G5 motif region spans residues 279–282 (KCRG). Residues 341-366 (LLENQIKESYQNLSDELQKYGTDIPE) form a bundle signaling element (BSE) region. The tract at residues 366-533 (EDETEKTFFL…HFQMEKIVYC (168 aa)) is middle domain. Positions 367–630 (DETEKTFFLI…RDTYDWLLKE (264 aa)) are stalk. The interval 554–557 (KKKK) is critical for lipid-binding. In terms of domain architecture, GED spans 572–660 (MAEILEHLNA…ARRRLAKFPG (89 aa)).

The protein belongs to the TRAFAC class dynamin-like GTPase superfamily. Dynamin/Fzo/YdjA family. In terms of assembly, homooligomer. Oligomerizes into multimeric filamentous or ring-like structures by virtue of its stalk domain. Oligomerization is critical for GTPase activity, protein stability, and recognition of viral target structures. Interacts with TRPC1, TRPC3, TRPC4, TRPC5, TRPC6 and TRPC7. Interacts with HSPA5. Interacts with TUBB/TUBB5. Interacts with DDX39A and DDX39B. In terms of processing, ISGylated.

It is found in the cytoplasm. The protein resides in the endoplasmic reticulum membrane. It localises to the perinuclear region. Functionally, interferon-induced dynamin-like GTPase with antiviral activity. The polypeptide is Interferon-induced GTP-binding protein Mx1 (MX1) (Equus caballus (Horse)).